A 392-amino-acid chain; its full sequence is Pyoverdine export membrane fusion protein PvdR (392 aa).

Positions 1-36 (MRRSTHTRRRLLLGGLGLLGLGSLLAWTSLPFGAQP) form a signal peptide, tat-type signal. A coiled-coil region spans residues 109 to 181 (IDNLKAQLAE…NASLRSDEAE (73 aa)). Residues 267 to 286 (PPKPLDQTSQGGGSPASATA) are disordered.

The protein belongs to the membrane fusion protein (MFP) (TC 8.A.1) family. As to quaternary structure, part of the tripartite efflux system PvdRT-OpmQ, which is composed of an inner membrane component with both ATPase and permease domains, PvdT, a periplasmic membrane fusion protein, PvdR, and an outer membrane component, OpmQ. Post-translationally, predicted to be exported by the Tat system. The position of the signal peptide cleavage has not been experimentally proven.

The protein resides in the periplasm. Part of the tripartite efflux system PvdRT-OpmQ required for the secretion into the extracellular milieu of the siderophore pyoverdine (PVD), which is involved in iron acquisition. This subunit is an adapter protein that stimulates the ATPase activity of PvdT and connects the inner and outer membrane components. The system is responsible for export of newly synthesized PVD after the final steps of biosynthesis have taken place in the periplasm. It is also responsible for recycling of PVD after internalization of ferri-PVD into the periplasm by the outer-membrane receptor FpvA and release of iron from PVD, thus making PVD available for new cycles of iron uptake. Contributes to resistance against ampicillin. This is Pyoverdine export membrane fusion protein PvdR from Pseudomonas putida (strain ATCC 47054 / DSM 6125 / CFBP 8728 / NCIMB 11950 / KT2440).